The chain runs to 319 residues: HTH-type transcriptional regulator YidZ (319 aa).

In terms of domain architecture, HTH lysR-type spans 8-65; that stretch reads LDLNLLLCLQLLMQERSVTKAAKRMNVTPSAVSKSLAKLRAWFDDPLFVNTPLGLAPT. Residues 25 to 44 constitute a DNA-binding region (H-T-H motif); the sequence is VTKAAKRMNVTPSAVSKSLA.

It belongs to the LysR transcriptional regulatory family.

Its function is as follows. Involved in anaerobic NO protection. This Salmonella agona (strain SL483) protein is HTH-type transcriptional regulator YidZ.